The following is a 666-amino-acid chain: Endogenous retrovirus group K member 7 Gag polyprotein (666 aa).

Gly-2 is lipidated: N-myristoyl glycine. Disordered regions lie at residues Gly-165–Gln-205 and Glu-217–Leu-264. Positions Gly-232–Pro-247 are enriched in pro residues. 2 consecutive CCHC-type zinc fingers follow at residues Gly-544 to Val-561 and Asp-580 to Ser-597. A disordered region spans residues Lys-598–Leu-641. Over residues Gln-604–Gly-622 the composition is skewed to polar residues.

The protein belongs to the beta type-B retroviral Gag protein family. HERV class-II K(HML-2) gag subfamily. Post-translationally, specific enzymatic cleavages may yield mature proteins. Myristoylation is essential for retroviral assembly. Alteration of the glycine residue leads to a block in the budding of particles and an accumulation of Gag inside the cell.

The protein resides in the cell membrane. In terms of biological role, the products of the Gag polyproteins of infectious retroviruses perform highly complex orchestrated tasks during the assembly, budding, maturation, and infection stages of the viral replication cycle. During viral assembly, the proteins form membrane associations and self-associations that ultimately result in budding of an immature virion from the infected cell. Gag precursors also function during viral assembly to selectively bind and package two plus strands of genomic RNA. Endogenous Gag proteins may have kept, lost or modified their original function during evolution. The chain is Endogenous retrovirus group K member 7 Gag polyprotein (ERVK-7) from Homo sapiens (Human).